Here is a 196-residue protein sequence, read N- to C-terminus: Probable malonic semialdehyde reductase RutE (196 aa).

Belongs to the nitroreductase family. HadB/RutE subfamily. The cofactor is FMN.

The catalysed reaction is 3-hydroxypropanoate + NADP(+) = 3-oxopropanoate + NADPH + H(+). Functionally, may reduce toxic product malonic semialdehyde to 3-hydroxypropionic acid, which is excreted. In Shigella flexneri serotype 5b (strain 8401), this protein is Probable malonic semialdehyde reductase RutE.